The primary structure comprises 515 residues: ATP synthase subunit alpha (515 aa).

169 to 176 (GDRQTGKT) provides a ligand contact to ATP.

Belongs to the ATPase alpha/beta chains family. In terms of assembly, F-type ATPases have 2 components, CF(1) - the catalytic core - and CF(0) - the membrane proton channel. CF(1) has five subunits: alpha(3), beta(3), gamma(1), delta(1), epsilon(1). CF(0) has three main subunits: a(1), b(2) and c(9-12). The alpha and beta chains form an alternating ring which encloses part of the gamma chain. CF(1) is attached to CF(0) by a central stalk formed by the gamma and epsilon chains, while a peripheral stalk is formed by the delta and b chains.

It localises to the cell inner membrane. It carries out the reaction ATP + H2O + 4 H(+)(in) = ADP + phosphate + 5 H(+)(out). In terms of biological role, produces ATP from ADP in the presence of a proton gradient across the membrane. The alpha chain is a regulatory subunit. The sequence is that of ATP synthase subunit alpha from Neisseria meningitidis serogroup A / serotype 4A (strain DSM 15465 / Z2491).